The primary structure comprises 446 residues: 3-phosphoshikimate 1-carboxyvinyltransferase (446 aa).

Residues lysine 27, serine 28, and arginine 32 each coordinate 3-phosphoshikimate. Lysine 27 is a phosphoenolpyruvate binding site. 2 residues coordinate phosphoenolpyruvate: glycine 100 and arginine 128. The 3-phosphoshikimate site is built by serine 177, glutamine 179, aspartate 330, and lysine 357. Residue glutamine 179 coordinates phosphoenolpyruvate. Aspartate 330 (proton acceptor) is an active-site residue. The phosphoenolpyruvate site is built by arginine 361 and arginine 406.

The protein belongs to the EPSP synthase family. Monomer.

It is found in the cytoplasm. It carries out the reaction 3-phosphoshikimate + phosphoenolpyruvate = 5-O-(1-carboxyvinyl)-3-phosphoshikimate + phosphate. It functions in the pathway metabolic intermediate biosynthesis; chorismate biosynthesis; chorismate from D-erythrose 4-phosphate and phosphoenolpyruvate: step 6/7. Functionally, catalyzes the transfer of the enolpyruvyl moiety of phosphoenolpyruvate (PEP) to the 5-hydroxyl of shikimate-3-phosphate (S3P) to produce enolpyruvyl shikimate-3-phosphate and inorganic phosphate. The sequence is that of 3-phosphoshikimate 1-carboxyvinyltransferase from Sphingopyxis alaskensis (strain DSM 13593 / LMG 18877 / RB2256) (Sphingomonas alaskensis).